The chain runs to 270 residues: 3-phenylpropionate-dihydrodiol/cinnamic acid-dihydrodiol dehydrogenase (270 aa).

10–34 (FITGGGSGLGLALVERFIEEGAQVA) lines the NAD(+) pocket. S143 serves as a coordination point for substrate. The active-site Proton acceptor is the Y156.

The protein belongs to the short-chain dehydrogenases/reductases (SDR) family.

It carries out the reaction 3-(cis-5,6-dihydroxycyclohexa-1,3-dien-1-yl)propanoate + NAD(+) = 3-(2,3-dihydroxyphenyl)propanoate + NADH + H(+). The enzyme catalyses (2E)-3-(cis-5,6-dihydroxycyclohexa-1,3-dien-1-yl)prop-2-enoate + NAD(+) = (2E)-3-(2,3-dihydroxyphenyl)prop-2-enoate + NADH + H(+). Its pathway is aromatic compound metabolism; 3-phenylpropanoate degradation. Functionally, converts 3-phenylpropionate-dihydrodiol (PP-dihydrodiol) and cinnamic acid-dihydrodiol (CI-dihydrodiol) into 3-(2,3-dihydroxylphenyl)propanoic acid (DHPP) and 2,3-dihydroxicinnamic acid (DHCI), respectively. The chain is 3-phenylpropionate-dihydrodiol/cinnamic acid-dihydrodiol dehydrogenase from Escherichia coli O157:H7.